A 132-amino-acid chain; its full sequence is Fatty acid-binding protein, intestinal (132 aa).

A2 is subject to N-acetylalanine. Hexadecanoate contacts are provided by W83 and R107. Tetradecanoate-binding residues include W83 and R107.

This sequence belongs to the calycin superfamily. Fatty-acid binding protein (FABP) family. Expressed in the small intestine. Highest expression levels in the proximal ileum.

It is found in the cytoplasm. Its function is as follows. FABPs are thought to play a role in the intracellular transport of long-chain fatty acids and their acyl-CoA esters. FABP2 is probably involved in triglyceride-rich lipoprotein synthesis. Binds saturated long-chain fatty acids with a high affinity, but binds with a lower affinity to unsaturated long-chain fatty acids. FABP2 may also help maintain energy homeostasis by functioning as a lipid sensor. This is Fatty acid-binding protein, intestinal (Fabp2) from Mus musculus (Mouse).